A 274-amino-acid polypeptide reads, in one-letter code: tRNA-cytidine(32) 2-sulfurtransferase (274 aa).

The PP-loop motif motif lies at 40–45 (SGGKDS). [4Fe-4S] cluster is bound by residues Cys115, Cys118, and Cys206.

It belongs to the TtcA family. Homodimer. It depends on Mg(2+) as a cofactor. Requires [4Fe-4S] cluster as cofactor.

It is found in the cytoplasm. It catalyses the reaction cytidine(32) in tRNA + S-sulfanyl-L-cysteinyl-[cysteine desulfurase] + AH2 + ATP = 2-thiocytidine(32) in tRNA + L-cysteinyl-[cysteine desulfurase] + A + AMP + diphosphate + H(+). It participates in tRNA modification. Catalyzes the ATP-dependent 2-thiolation of cytidine in position 32 of tRNA, to form 2-thiocytidine (s(2)C32). The sulfur atoms are provided by the cysteine/cysteine desulfurase (IscS) system. This chain is tRNA-cytidine(32) 2-sulfurtransferase, found in Pseudomonas paraeruginosa (strain DSM 24068 / PA7) (Pseudomonas aeruginosa (strain PA7)).